A 562-amino-acid polypeptide reads, in one-letter code: Phosphoacetylglucosamine mutase (562 aa).

S74 (phosphoserine intermediate) is an active-site residue. Mg(2+)-binding residues include S74, D291, D293, and D295. Substrate contacts are provided by residues 395 to 397 (EAN), 526 to 530 (RPSGT), and R535.

This sequence belongs to the phosphohexose mutase family. Requires Mg(2+) as cofactor.

The enzyme catalyses N-acetyl-alpha-D-glucosamine 1-phosphate = N-acetyl-D-glucosamine 6-phosphate. The protein operates within nucleotide-sugar biosynthesis; UDP-N-acetyl-alpha-D-glucosamine biosynthesis; N-acetyl-alpha-D-glucosamine 1-phosphate from alpha-D-glucosamine 6-phosphate (route I): step 2/2. In terms of biological role, interconverts GlcNAc-6-P and GlcNAc-1-P. This Oryza sativa subsp. japonica (Rice) protein is Phosphoacetylglucosamine mutase.